Consider the following 882-residue polypeptide: Bifunctional heparan sulfate N-deacetylase/N-sulfotransferase 1 (882 aa).

At 1–17 (MPALACLRRLCRHLSPQ) the chain is on the cytoplasmic side. The segment at 1-169 (MPALACLRRL…VAYGVGIIGF (169 aa)) is sufficient for localization to Golgi membrane. Residues 18–38 (AVLFLLFVFCLFSVFVSAYYL) form a helical; Signal-anchor for type II membrane protein membrane-spanning segment. The Lumenal segment spans residues 39–882 (YGWNRGLEPS…WLREDLQNTR (844 aa)). Residues 40–598 (GWNRGLEPSA…KRHKDIWSKE (559 aa)) are heparan sulfate N-deacetylase 1. N-linked (GlcNAc...) asparagine glycosylation is found at asparagine 231, asparagine 351, and asparagine 401. The interval 599–882 (KTCDRFPKLL…WLREDLQNTR (284 aa)) is heparan sulfate N-sulfotransferase 1. Lysine 614 acts as the For sulfotransferase activity in catalysis. 614 to 618 (KTGTT) is a binding site for adenosine 3',5'-bisphosphate. N-linked (GlcNAc...) asparagine glycosylation is present at asparagine 667. Positions 712 and 817 each coordinate adenosine 3',5'-bisphosphate. Cysteine 818 and cysteine 828 are oxidised to a cystine. Residue 833–837 (KGRKY) participates in adenosine 3',5'-bisphosphate binding.

Belongs to the sulfotransferase 1 family. NDST subfamily. Monomer. Interacts with heparan sulfate co-polymerase subunits EXT1 and EXT2. In terms of tissue distribution, widely expressed in adult and throughout development.

It is found in the golgi apparatus membrane. The protein localises to the golgi apparatus. It localises to the trans-Golgi network membrane. The protein resides in the cis-Golgi network membrane. It carries out the reaction N-acetyl-alpha-D-glucosaminyl-[heparan sulfate](n) + H2O = alpha-D-glucosaminyl-[heparan sulfate](n) + acetate. The catalysed reaction is alpha-D-glucosaminyl-[heparan sulfate](n) + 3'-phosphoadenylyl sulfate = N-sulfo-alpha-D-glucosaminyl-[heparan sulfate](n) + adenosine 3',5'-bisphosphate + 2 H(+). Its pathway is glycan metabolism; heparan sulfate biosynthesis. It functions in the pathway glycan metabolism; heparin biosynthesis. Its activity is regulated as follows. Inhibited by long N-sulfated sequences (more than 6 sugar residues) accumulating in its substrates heparan sulfate, and heparin. Functionally, essential bifunctional enzyme that catalyzes both the N-deacetylation and the N-sulfation of glucosamine (GlcNAc) of the glycosaminoglycan in heparan sulfate. Modifies the GlcNAc-GlcA disaccharide repeating sugar backbone to make N-sulfated heparosan, a prerequisite substrate for later modifications in heparin biosynthesis. Plays a role in determining the extent and pattern of sulfation of heparan sulfate. Participates in biosynthesis of heparan sulfate that can ultimately serve as L-selectin ligands, thereby playing a role in inflammatory response. Required for the exosomal release of SDCBP, CD63 and syndecan. The chain is Bifunctional heparan sulfate N-deacetylase/N-sulfotransferase 1 from Mus musculus (Mouse).